A 583-amino-acid chain; its full sequence is Poly [ADP-ribose] polymerase 2 (583 aa).

The disordered stretch occupies residues M1–K77. An N-terminal region (NTR) region spans residues M1 to G103. Short sequence motifs (nuclear localization signal) lie at residues K21 to R22 and P35 to R40. An N6-acetyllysine mark is found at K37 and K38. The segment covering A57 to D67 has biased composition (basic and acidic residues). The region spanning K104 to Y201 is the WGR domain. A phosphoserine mark is found at S226 and S232. A PARP alpha-helical domain is found at E231 to K348. The region spanning H356–W583 is the PARP catalytic domain. NAD(+) contacts are provided by residues H428–S430, G437, R444, and S470. E558 serves as the catalytic For poly [ADP-ribose] polymerase activity.

This sequence belongs to the ARTD/PARP family. In terms of assembly, component of a base excision repair (BER) complex, containing at least XRCC1, PARP1, POLB and LRIG3. Homo- and heterodimer with PARP1. Interacts (via the PARP catalytic domain) with HPF1. Interacts with core nucleosomes. Auto poly-ADP-ribosylated on serine residues, leading to dissociation of the PARP2-HPF1 complex from chromatin. Poly-ADP-ribosylated by PARP1. Post-translationally, acetylation reduces DNA binding and enzymatic activity. In terms of processing, proteolytically cleaved by caspase-8 (CASP8) in response to apoptosis, leading to its inactivation. As to expression, widely expressed, mainly in actively dividing tissues. The highest levels are in the brain, heart, pancreas, skeletal muscle and testis; also detected in kidney, liver, lung, placenta, ovary and spleen; levels are low in leukocytes, colon, small intestine, prostate and thymus.

It localises to the nucleus. The protein localises to the chromosome. The catalysed reaction is NAD(+) + (ADP-D-ribosyl)n-acceptor = nicotinamide + (ADP-D-ribosyl)n+1-acceptor + H(+).. The enzyme catalyses L-seryl-[protein] + NAD(+) = O-(ADP-D-ribosyl)-L-seryl-[protein] + nicotinamide + H(+). It catalyses the reaction L-aspartyl-[protein] + NAD(+) = 4-O-(ADP-D-ribosyl)-L-aspartyl-[protein] + nicotinamide. It carries out the reaction L-glutamyl-[protein] + NAD(+) = 5-O-(ADP-D-ribosyl)-L-glutamyl-[protein] + nicotinamide. ADP-ribosyltransferase activity is regulated via an allosteric activation mechanism. In absence of activation signal, PARP2 is autoinhibited by the PARP alpha-helical domain (also named HD region), which prevents effective NAD(+)-binding. Activity is highly stimulated by signals, which unfold the PARP alpha-helical domain, relieving autoinhibition. Poly-ADP-ribosyltransferase activity is tightly regulated and PARP2 is removed from damaged chromatin following initial poly-ADP-ribosylation of chromatin to avoid prolonged residence (trapping) that has cytotoxic consequences. CHD1L promotes PARP2 removal from chromatin. ADP-ribosyltransferase activity is inhibited by a number of PARP inhibitors (PARPi) compounds, that are used the treatment of breast or ovarian cancers that have defects in DNA repair by homologous recombination. PARPi molecules (niraparib, talazoparib, and, to a lesser extent, olaparib) also trap PARP2 at DNA damage sites. Poly-ADP-ribosyltransferase that mediates poly-ADP-ribosylation of proteins and plays a key role in DNA repair. Mediates glutamate, aspartate or serine ADP-ribosylation of proteins: the ADP-D-ribosyl group of NAD(+) is transferred to the acceptor carboxyl group of target residues and further ADP-ribosyl groups are transferred to the 2'-position of the terminal adenosine moiety, building up a polymer with an average chain length of 20-30 units. Serine ADP-ribosylation of proteins constitutes the primary form of ADP-ribosylation of proteins in response to DNA damage. Mediates glutamate and aspartate ADP-ribosylation of target proteins in absence of HPF1. Following interaction with HPF1, catalyzes serine ADP-ribosylation of target proteins; HPF1 conferring serine specificity by completing the PARP2 active site. PARP2 initiates the repair of double-strand DNA breaks: recognizes and binds DNA breaks within chromatin and recruits HPF1, licensing serine ADP-ribosylation of target proteins, such as histones, thereby promoting decompaction of chromatin and the recruitment of repair factors leading to the reparation of DNA strand breaks. HPF1 initiates serine ADP-ribosylation but restricts the polymerase activity of PARP2 in order to limit the length of poly-ADP-ribose chains. Specifically mediates formation of branched poly-ADP-ribosylation. Branched poly-ADP-ribose chains are specifically recognized by some factors, such as APLF. In addition to proteins, also able to ADP-ribosylate DNA: preferentially acts on 5'-terminal phosphates at DNA strand breaks termini in nicked duplex. The chain is Poly [ADP-ribose] polymerase 2 from Homo sapiens (Human).